The chain runs to 184 residues: Photosystem I assembly protein Ycf4 (184 aa).

A run of 2 helical transmembrane segments spans residues 22 to 42 and 57 to 77; these read FFWACILFLGSLGFLLVGTSS and IPFFPQGIVMSFYGIAGLFIS.

The protein belongs to the Ycf4 family.

It is found in the plastid. It localises to the chloroplast thylakoid membrane. Its function is as follows. Seems to be required for the assembly of the photosystem I complex. This chain is Photosystem I assembly protein Ycf4, found in Ceratophyllum demersum (Rigid hornwort).